A 389-amino-acid polypeptide reads, in one-letter code: Putative F-box protein At1g47790 (389 aa).

Residues 19–65 (SKPTSSFPLDLASEILLRLPVKSVVRFRCVSKLWSSIITDPYFIKTY) form the F-box domain.

This chain is Putative F-box protein At1g47790, found in Arabidopsis thaliana (Mouse-ear cress).